Reading from the N-terminus, the 158-residue chain is MNKPKNSPARKMIAENRKARFNFEILDTLEAGLVLTGTEVKSLRANQANIAESYASFEDGEFWLINSYIPEYTQGNRFNHEPRRLRKLLVSRREMSRLFNSVSREGMTVVPLKLYFNDRGRAKLELALARGKKTHDKRETEKKRDWNREKARLLRDRG.

The interval 131-158 (GKKTHDKRETEKKRDWNREKARLLRDRG) is disordered. Positions 136-158 (DKRETEKKRDWNREKARLLRDRG) are enriched in basic and acidic residues.

The protein belongs to the SmpB family.

It localises to the cytoplasm. In terms of biological role, required for rescue of stalled ribosomes mediated by trans-translation. Binds to transfer-messenger RNA (tmRNA), required for stable association of tmRNA with ribosomes. tmRNA and SmpB together mimic tRNA shape, replacing the anticodon stem-loop with SmpB. tmRNA is encoded by the ssrA gene; the 2 termini fold to resemble tRNA(Ala) and it encodes a 'tag peptide', a short internal open reading frame. During trans-translation Ala-aminoacylated tmRNA acts like a tRNA, entering the A-site of stalled ribosomes, displacing the stalled mRNA. The ribosome then switches to translate the ORF on the tmRNA; the nascent peptide is terminated with the 'tag peptide' encoded by the tmRNA and targeted for degradation. The ribosome is freed to recommence translation, which seems to be the essential function of trans-translation. The sequence is that of SsrA-binding protein from Brucella abortus biovar 1 (strain 9-941).